The following is an 87-amino-acid chain: MNIFGIGLPEMIVILVVALLIFGPKKLPEIGRSLGQAINSFKAGARDFENEFKREAKHLEEGVKVSTSASEPEKVVDVSSATNTNKN.

A helical membrane pass occupies residues Ile3–Gly23. The segment at Glu61–Asn87 is disordered.

This sequence belongs to the TatA/E family. As to quaternary structure, forms a complex with TatC.

It is found in the cell inner membrane. Its function is as follows. Part of the twin-arginine translocation (Tat) system that transports large folded proteins containing a characteristic twin-arginine motif in their signal peptide across membranes. TatA could form the protein-conducting channel of the Tat system. This chain is Sec-independent protein translocase protein TatA, found in Trichodesmium erythraeum (strain IMS101).